The primary structure comprises 458 residues: Cysteine--tRNA ligase (458 aa).

Residue Cys29 coordinates Zn(2+). Positions 31-41 match the 'HIGH' region motif; sequence PTVYDFLHIGN. Cys211, His236, and Glu240 together coordinate Zn(2+). The 'KMSKS' region signature appears at 269-273; the sequence is KMSKS. ATP is bound at residue Lys272.

Belongs to the class-I aminoacyl-tRNA synthetase family. In terms of assembly, monomer. The cofactor is Zn(2+).

The protein resides in the cytoplasm. It catalyses the reaction tRNA(Cys) + L-cysteine + ATP = L-cysteinyl-tRNA(Cys) + AMP + diphosphate. The chain is Cysteine--tRNA ligase from Beijerinckia indica subsp. indica (strain ATCC 9039 / DSM 1715 / NCIMB 8712).